A 612-amino-acid polypeptide reads, in one-letter code: Baeyer-Villiger monooxygenase 4 (612 aa).

Residues E99, 107 to 110 (TWYW), D119, Y125, and A169 each bind FAD. 117–119 (QCD) contributes to the NADP(+) binding site. NADP(+) is bound by residues 253–259 (TGATGVQ), 276–277 (RT), and 393–394 (KR).

This sequence belongs to the FAD-binding monooxygenase family. FAD serves as cofactor.

Catalyzes a Baeyer-Villiger oxidation reaction, i.e. the insertion of an oxygen atom into a carbon-carbon bond adjacent to a carbonyl, which converts ketones to esters or lactones using NADPH as an electron donor. Has a broad substrate scope and oxidizes different compounds including substituted and unsubstituted alicyclic, bicyclic-, aliphatic-ketones, ketones with an aromatic moiety, and sulfides. The highest activities are measured for 2- and 3-methylcyclohexanone, phenylacetone, bicyclo[3.2.0]hept-2-en-6-one and menthone. Cannot use NADH instead of NADPH. Is not active on benzaldehyde. The polypeptide is Baeyer-Villiger monooxygenase 4 (Dietzia sp. (strain D5)).